The chain runs to 194 residues: MKLLHLDSSALGATSISRELSAAIVAQQRRLYPEVEVTYRDLDRDPIPHLTAQTLAQTDPAEAAAAEAVMQQFLQAEVIVIGAPMYNFAIPSTLKAWIDRIAVAGRTFHYTANGPEGLAGGKRLIIASARGGVYAEPSNDFQEPYLRQLFGFLGIDDITLVRAEGVAYSPQHRADALAAALAGLRAEQDAAVMA.

FMN contacts are provided by residues Ser-9, 15–17 (SIS), and 85–88 (MYNF).

The protein belongs to the azoreductase type 1 family. As to quaternary structure, homodimer. Requires FMN as cofactor.

The enzyme catalyses 2 a quinone + NADH + H(+) = 2 a 1,4-benzosemiquinone + NAD(+). The catalysed reaction is N,N-dimethyl-1,4-phenylenediamine + anthranilate + 2 NAD(+) = 2-(4-dimethylaminophenyl)diazenylbenzoate + 2 NADH + 2 H(+). Quinone reductase that provides resistance to thiol-specific stress caused by electrophilic quinones. Functionally, also exhibits azoreductase activity. Catalyzes the reductive cleavage of the azo bond in aromatic azo compounds to the corresponding amines. The sequence is that of FMN-dependent NADH:quinone oxidoreductase from Xanthomonas oryzae pv. oryzae (strain KACC10331 / KXO85).